Consider the following 481-residue polypeptide: Probable squalene synthase (481 aa).

The next 2 membrane-spanning stretches (helical) occupy residues 294 to 314 and 416 to 436; these read SVFN…ELVF and FLVL…IGAA.

It belongs to the phytoene/squalene synthase family. It depends on Mg(2+) as a cofactor.

It is found in the endoplasmic reticulum membrane. The enzyme catalyses 2 (2E,6E)-farnesyl diphosphate + NADPH + H(+) = squalene + 2 diphosphate + NADP(+). The catalysed reaction is 2 (2E,6E)-farnesyl diphosphate + NADH + H(+) = squalene + 2 diphosphate + NAD(+). The protein operates within terpene metabolism; lanosterol biosynthesis; lanosterol from farnesyl diphosphate: step 1/3. In terms of biological role, catalyzes the condensation of 2 two farnesyl pyrophosphate moieties to form squalene. It is the first committed enzyme of the sterol biosynthesis pathway. Required for the biosynthesis of ergosterol. The chain is Probable squalene synthase (erg-6) from Neurospora crassa (strain ATCC 24698 / 74-OR23-1A / CBS 708.71 / DSM 1257 / FGSC 987).